A 203-amino-acid polypeptide reads, in one-letter code: Guanylate kinase (203 aa).

The region spanning 3–181 (GTLYIVAAPS…AVSEMCAIFT (179 aa)) is the Guanylate kinase-like domain. 10–17 (APSGAGKS) contributes to the ATP binding site.

It belongs to the guanylate kinase family.

It is found in the cytoplasm. It carries out the reaction GMP + ATP = GDP + ADP. In terms of biological role, essential for recycling GMP and indirectly, cGMP. This is Guanylate kinase from Xanthomonas axonopodis pv. citri (strain 306).